Here is a 400-residue protein sequence, read N- to C-terminus: Lysophospholipid transporter LplT (400 aa).

A run of 12 helical transmembrane segments spans residues 19 to 39 (VIVA…ATLA), 53 to 73 (VLQM…GQMA), 91 to 111 (AGAA…LVGI), 139 to 159 (LMEA…GVLA), 164 to 184 (IAAL…NLFI), 195 to 213 (SWRL…VVLW), 227 to 247 (LFWG…PVAL), 257 to 277 (YLNA…AKLV), 281 to 301 (TVSR…IFSL), 304 to 324 (ALLP…FFVV), 352 to 372 (NSAM…GVPA), and 373 to 393 (VAIG…LWIW).

It belongs to the major facilitator superfamily. LplT (TC 2.A.1.42) family.

It is found in the cell inner membrane. Its function is as follows. Catalyzes the facilitated diffusion of 2-acyl-glycero-3-phosphoethanolamine (2-acyl-GPE) into the cell. The chain is Lysophospholipid transporter LplT from Salmonella enteritidis PT4 (strain P125109).